We begin with the raw amino-acid sequence, 397 residues long: 3-ketoacyl-CoA thiolase, mitochondrial (397 aa).

A mitochondrion; not cleaved-targeting transit peptide spans 1-16; it reads MALLRGVFIVAAKRTP. At lysine 25 the chain carries N6-acetyllysine; alternate. Position 25 is an N6-succinyllysine; alternate (lysine 25). Residue lysine 45 is modified to N6-succinyllysine. Residue cysteine 92 is the Acyl-thioester intermediate of the active site. Threonine 119 bears the Phosphothreonine mark. Serine 121 bears the Phosphoserine mark. Tyrosine 127 is subject to Phosphotyrosine. At threonine 136 the chain carries Phosphothreonine. An N6-acetyllysine; alternate mark is found at lysine 137, lysine 143, lysine 158, lysine 171, lysine 191, and lysine 209. Residues lysine 137, lysine 143, lysine 158, lysine 171, lysine 191, and lysine 209 each carry the N6-succinyllysine; alternate modification. An N6-succinyllysine mark is found at lysine 211, lysine 212, and lysine 214. Residues arginine 224 and threonine 227 each coordinate CoA. N6-succinyllysine is present on lysine 240. Lysine 241 is subject to N6-acetyllysine. Serine 251 is a binding site for CoA. 2 positions are modified to N6-acetyllysine: lysine 269 and lysine 270. Position 305 is an N6-acetyllysine; alternate (lysine 305). An N6-succinyllysine; alternate modification is found at lysine 305. Residue serine 310 is modified to Phosphoserine. The residue at position 312 (lysine 312) is an N6-acetyllysine; alternate. Lysine 312 carries the N6-succinyllysine; alternate modification. Serine 333 bears the Phosphoserine mark. The residue at position 340 (lysine 340) is an N6-acetyllysine. Position 344 is a phosphoserine (serine 344). At lysine 375 the chain carries N6-acetyllysine. Cysteine 382 acts as the Proton donor/acceptor in catalysis.

The protein belongs to the thiolase-like superfamily. Thiolase family. As to quaternary structure, homotetramer. Interacts with BNIP3. As to expression, expressed in liver, brown adipose tissue and heart (at protein level).

It localises to the mitochondrion. It catalyses the reaction an acyl-CoA + acetyl-CoA = a 3-oxoacyl-CoA + CoA. The enzyme catalyses 2 acetyl-CoA = acetoacetyl-CoA + CoA. It carries out the reaction acetyl-CoA + H2O = acetate + CoA + H(+). The catalysed reaction is propanoyl-CoA + H2O = propanoate + CoA + H(+). It catalyses the reaction butanoyl-CoA + H2O = butanoate + CoA + H(+). The enzyme catalyses hexanoyl-CoA + H2O = hexanoate + CoA + H(+). It carries out the reaction octanoyl-CoA + H2O = octanoate + CoA + H(+). The catalysed reaction is decanoyl-CoA + H2O = decanoate + CoA + H(+). It catalyses the reaction dodecanoyl-CoA + H2O = dodecanoate + CoA + H(+). The enzyme catalyses tetradecanoyl-CoA + H2O = tetradecanoate + CoA + H(+). It carries out the reaction hexadecanoyl-CoA + H2O = hexadecanoate + CoA + H(+). Its pathway is lipid metabolism; fatty acid beta-oxidation. The 3-oxoacetyl-CoA thiolase activity is inhibited by acetyl-CoA while the acetyl-CoA hydrolase activity is inhibited by acetoacetyl-CoA. In the production of energy from fats, this is one of the enzymes that catalyzes the last step of the mitochondrial beta-oxidation pathway, an aerobic process breaking down fatty acids into acetyl-CoA. Using free coenzyme A/CoA, catalyzes the thiolytic cleavage of medium- to long-chain unbranched 3-oxoacyl-CoAs into acetyl-CoA and a fatty acyl-CoA shortened by two carbon atoms. Also catalyzes the condensation of two acetyl-CoA molecules into acetoacetyl-CoA and could be involved in the production of ketone bodies. Also displays hydrolase activity on various fatty acyl-CoAs. Thereby, could be responsible for the production of acetate in a side reaction to beta-oxidation. Abolishes BNIP3-mediated apoptosis and mitochondrial damage. The protein is 3-ketoacyl-CoA thiolase, mitochondrial (Acaa2) of Rattus norvegicus (Rat).